Here is a 450-residue protein sequence, read N- to C-terminus: LanC-like protein 2 (450 aa).

Gly2 carries N-myristoyl glycine lipidation. Positions 2-15 (GETMSKRLKLHLGG) are interaction with inositol phospholipids. Tyr198 carries the phosphotyrosine modification.

Belongs to the LanC-like protein family. Interacts with an array of inositol phospholipids such as phosphatidylinositol 3-phosphate (PI3P), phosphatidylinositol 4-phosphate (PI4P) and phosphatidylinositol 5-phosphate (PI5P). PIP-binding enhances membrane association. In terms of processing, myristoylated. Essential for membrane association. Expressed in brain and testis.

The protein resides in the nucleus. Its subcellular location is the cytoplasm. It is found in the cell membrane. Functionally, necessary for abscisic acid (ABA) binding on the cell membrane and activation of the ABA signaling pathway in granulocytes. This Homo sapiens (Human) protein is LanC-like protein 2 (LANCL2).